Here is a 754-residue protein sequence, read N- to C-terminus: 5-methyltetrahydropteroyltriglutamate--homocysteine methyltransferase (754 aa).

5-methyltetrahydropteroyltri-L-glutamate contacts are provided by residues 17-20 and K117; that span reads RELK. Residues 431 to 433 and E484 contribute to the L-homocysteine site; that span reads IGS. Residues 431–433 and E484 contribute to the L-methionine site; that span reads IGS. Residues 515–516 and W561 contribute to the 5-methyltetrahydropteroyltri-L-glutamate site; that span reads RC. An L-homocysteine-binding site is contributed by D599. Residue D599 coordinates L-methionine. E605 is a binding site for 5-methyltetrahydropteroyltri-L-glutamate. Positions 641, 643, and 665 each coordinate Zn(2+). The Proton donor role is filled by H694. Residue C726 participates in Zn(2+) binding.

This sequence belongs to the vitamin-B12 independent methionine synthase family. Requires Zn(2+) as cofactor.

It catalyses the reaction 5-methyltetrahydropteroyltri-L-glutamate + L-homocysteine = tetrahydropteroyltri-L-glutamate + L-methionine. Its pathway is amino-acid biosynthesis; L-methionine biosynthesis via de novo pathway; L-methionine from L-homocysteine (MetE route): step 1/1. Catalyzes the transfer of a methyl group from 5-methyltetrahydrofolate to homocysteine resulting in methionine formation. This chain is 5-methyltetrahydropteroyltriglutamate--homocysteine methyltransferase, found in Klebsiella pneumoniae subsp. pneumoniae (strain ATCC 700721 / MGH 78578).